A 397-amino-acid polypeptide reads, in one-letter code: Elongation factor Tu (397 aa).

Residues 10–207 (KPHVNVGTIG…TLDAYIPEPE (198 aa)) form the tr-type G domain. The interval 19–26 (GHVDHGKT) is G1. 19 to 26 (GHVDHGKT) is a GTP binding site. Threonine 26 lines the Mg(2+) pocket. Positions 60–64 (GITIA) are G2. A G3 region spans residues 81–84 (DCPG). GTP contacts are provided by residues 81–85 (DCPGH) and 136–139 (NKAD). Positions 136-139 (NKAD) are G4. The tract at residues 174-176 (SAL) is G5.

The protein belongs to the TRAFAC class translation factor GTPase superfamily. Classic translation factor GTPase family. EF-Tu/EF-1A subfamily. In terms of assembly, monomer.

Its subcellular location is the cytoplasm. It carries out the reaction GTP + H2O = GDP + phosphate + H(+). Its function is as follows. GTP hydrolase that promotes the GTP-dependent binding of aminoacyl-tRNA to the A-site of ribosomes during protein biosynthesis. This chain is Elongation factor Tu, found in Hahella chejuensis (strain KCTC 2396).